The chain runs to 292 residues: Acidic endochitinase (292 aa).

The first 25 residues, 1-25, serve as a signal peptide directing secretion; that stretch reads MAAHKITTTLSIFFLLSSIFRSSDA. The 267-residue stretch at 26–292 folds into the GH18 domain; sequence AGIAIYWGQN…YSDSIKGSIG (267 aa). Disulfide bonds link Cys45/Cys92 and Cys75/Cys82. The active-site Proton donor is the Glu152. Cys180 and Cys209 are joined by a disulfide.

Belongs to the glycosyl hydrolase 18 family. Chitinase class II subfamily.

Its subcellular location is the secreted. It is found in the extracellular space. It carries out the reaction Random endo-hydrolysis of N-acetyl-beta-D-glucosaminide (1-&gt;4)-beta-linkages in chitin and chitodextrins.. Functionally, this protein functions as a defense against chitin containing fungal pathogens. This chain is Acidic endochitinase, found in Cucumis sativus (Cucumber).